Consider the following 530-residue polypeptide: Membrane-associated transporter protein (530 aa).

Residues 1–45 are Cytoplasmic-facing; it reads MSGSNGPTDTHTYQSLAEDCPFGSVEQPKRSTGRLVMHSMAMFGR. The helical transmembrane segment at 46–66 threads the bilayer; sequence EFCYAVEAAYVTPVLLSVGLP. The Extracellular portion of the chain corresponds to 67–68; sequence KS. The helical transmembrane segment at 69–89 threads the bilayer; it reads LYSMVWLLSPILGFLLQPVVG. At 90 to 105 the chain is on the cytoplasmic side; the sequence is SASDHCRARWGRRRPY. Residues 106-126 form a helical membrane-spanning segment; it reads ILTLAIMMLLGMALYLNGDAV. At 127 to 138 the chain is on the extracellular side; it reads VSALVANPRQKL. A helical transmembrane segment spans residues 139-159; that stretch reads IWAISITMVGVVLFDFSADFI. At 160–184 the chain is on the cytoplasmic side; it reads DGPIKAYLFDVCSHQDKEKGLHYHA. The helical transmembrane segment at 185–205 threads the bilayer; that stretch reads LFTGFGGALGYILGAIDWVHL. The Extracellular segment spans residues 206–216; the sequence is DLGRLLGTEFQ. A helical transmembrane segment spans residues 217–237; sequence VMFFFSALVLILCFITHLCSI. Topologically, residues 238–318 are cytoplasmic; that stretch reads PEAPLRDAAT…ALVNMPSHYR (81 aa). The segment at 275 to 299 is disordered; sequence KNGGADTEQPVQEWKNKKPSGQSQR. A helical transmembrane segment spans residues 319 to 339; that stretch reads CLCVSHLIGWTAFLSNMLFFT. Residues 340–366 are Extracellular-facing; that stretch reads DFMGQIVYHGDPYGAHNSTEFLIYERG. N-linked (GlcNAc...) asparagine glycosylation occurs at Asn-356. The chain crosses the membrane as a helical span at residues 367–387; it reads VEVGCWGLCINSVFSSVYSYF. Topologically, residues 388 to 398 are cytoplasmic; that stretch reads QKAMVSYIGLK. Residues 399 to 419 form a helical membrane-spanning segment; sequence GLYFMGYLLFGLGTGFIGLFP. Residues 420–425 lie on the Extracellular side of the membrane; the sequence is NVYSTL. The helical transmembrane segment at 426–446 threads the bilayer; it reads VLCSMFGVMSSTLYTVPFNLI. Topologically, residues 447–477 are cytoplasmic; that stretch reads AEYHREEEKEKGQEAPGGPDNQGRGKGVDCA. A helical transmembrane segment spans residues 478 to 498; that stretch reads ALTCMVQLAQILVGGGLGFLV. The Extracellular portion of the chain corresponds to 499–504; the sequence is NMAGSV. The chain crosses the membrane as a helical span at residues 505–525; sequence VVVVITASAVSLIGCCFVALF. The Cytoplasmic portion of the chain corresponds to 526-530; sequence VRYVD.

The protein belongs to the glycoside-pentoside-hexuronide (GPH) cation symporter transporter (TC 2.A.2) family. As to quaternary structure, interacts with TYRP1. In terms of tissue distribution, mainly expressed in eyeballs and skin melanocytes. Also detected in kidney, colon, gall bladder and pancreas.

The protein localises to the melanosome membrane. The catalysed reaction is sucrose(out) + H(+)(out) = sucrose(in) + H(+)(in). It carries out the reaction D-glucose(out) + H(+)(out) = D-glucose(in) + H(+)(in). Functionally, proton-associated glucose and sucrose transporter. May be able to transport also fructose. Expressed at a late melanosome maturation stage where functions as a proton/glucose exporter which increase lumenal pH by decreasing glycolysis. Regulates melanogenesis by maintaining melanosome neutralization that is initially initiated by transient OCA2 and required for a proper function of the tyrosinase TYR. The sequence is that of Membrane-associated transporter protein (Slc45a2) from Mus musculus (Mouse).